The chain runs to 83 residues: Conotoxin VnMKLT1-022 (83 aa).

The N-terminal stretch at 1-22 is a signal peptide; sequence MKLMCMMIVAVLFLTAWTFVTA. The propeptide occupies 23–55; that stretch reads DDSINGPENRRIWEKLLSKTRDEMKNPEASKLN. 3 disulfides stabilise this stretch: Cys-59/Cys-74, Cys-66/Cys-78, and Cys-73/Cys-82.

This sequence belongs to the conotoxin O1 superfamily. In terms of tissue distribution, expressed by the venom duct.

It localises to the secreted. The protein is Conotoxin VnMKLT1-022 of Conus ventricosus (Mediterranean cone).